Reading from the N-terminus, the 337-residue chain is Histidine N-acetyltransferase (337 aa).

Residues 1 to 2 (MK) constitute a propeptide, removed in mature form. In terms of domain architecture, N-acetyltransferase spans 21 to 157 (LQFSVATEED…GILLMRFRAE (137 aa)).

In terms of tissue distribution, expressed exclusively in the brain and lens.

The enzyme catalyses L-histidine + acetyl-CoA = N(alpha)-acetyl-L-histidine + CoA + H(+). Functionally, enzyme responsible for the N-acetyl-histidine (NAH) synthesis, which is a major constituent of brain and lens of ectothermic vertebrates. This Oreochromis niloticus (Nile tilapia) protein is Histidine N-acetyltransferase (hisat).